Reading from the N-terminus, the 408-residue chain is Protein BTN1 (408 aa).

Positions 1-30 (MSDKSHQIYCYFWLFGLINNVLYVVILSAA) are cleaved as a signal peptide. Transmembrane regions (helical) follow at residues 42 to 62 (LVLLADIFPSLAIKLCSPFFI), 80 to 100 (LGMFLVSFKNLFVCLLGISFA), 128 to 148 (SGTGGAGIIGGASYMFLTSIF), 150 to 170 (VPVKLTLLVFSLLPFAFLFYF), 238 to 258 (TVYLFEYLINQAVAPTLLFPI), 323 to 343 (WFYVTHSPWAVMILIFYEGFL), and 369 to 389 (GAVSIADSFGVFLAALLGLGL).

Belongs to the battenin family.

It localises to the vacuole membrane. Its function is as follows. Plays a role in vacuolar arginine transport. Involved in pH homeostasis. May be involved in ion homeostasis together with IST2. Not necessary for mitochondrial function or ATP synthase degradation. This Saccharomyces cerevisiae (strain ATCC 204508 / S288c) (Baker's yeast) protein is Protein BTN1 (YHC3).